Here is a 690-residue protein sequence, read N- to C-terminus: Elongation factor G (690 aa).

In terms of domain architecture, tr-type G spans 8–283; it reads EDYRNFGIMA…AVVDYLPSPV (276 aa). GTP contacts are provided by residues 17–24, 81–85, and 135–138; these read AHIDAGKT, DTPGH, and NKMD.

Belongs to the TRAFAC class translation factor GTPase superfamily. Classic translation factor GTPase family. EF-G/EF-2 subfamily.

It localises to the cytoplasm. Catalyzes the GTP-dependent ribosomal translocation step during translation elongation. During this step, the ribosome changes from the pre-translocational (PRE) to the post-translocational (POST) state as the newly formed A-site-bound peptidyl-tRNA and P-site-bound deacylated tRNA move to the P and E sites, respectively. Catalyzes the coordinated movement of the two tRNA molecules, the mRNA and conformational changes in the ribosome. This Rhodopseudomonas palustris (strain HaA2) protein is Elongation factor G.